The chain runs to 160 residues: CXXC motif containing zinc binding protein (160 aa).

Cysteine 33, cysteine 36, cysteine 67, and cysteine 70 together coordinate Zn(2+). Position 75 is a phosphoserine (serine 75).

The protein belongs to the UPF0587 family. As to quaternary structure, monomer.

This is CXXC motif containing zinc binding protein (CZIB) from Bos taurus (Bovine).